We begin with the raw amino-acid sequence, 124 residues long: Small ribosomal subunit protein uS12 (124 aa).

The disordered stretch occupies residues 1-25 (MATINQLVRKPRQATTYKSASPALD). Asp89 is modified (3-methylthioaspartic acid).

Belongs to the universal ribosomal protein uS12 family. As to quaternary structure, part of the 30S ribosomal subunit. Contacts proteins S8 and S17. May interact with IF1 in the 30S initiation complex.

Its function is as follows. With S4 and S5 plays an important role in translational accuracy. Interacts with and stabilizes bases of the 16S rRNA that are involved in tRNA selection in the A site and with the mRNA backbone. Located at the interface of the 30S and 50S subunits, it traverses the body of the 30S subunit contacting proteins on the other side and probably holding the rRNA structure together. The combined cluster of proteins S8, S12 and S17 appears to hold together the shoulder and platform of the 30S subunit. The sequence is that of Small ribosomal subunit protein uS12 from Stenotrophomonas maltophilia (strain R551-3).